The chain runs to 189 residues: 3-isopropylmalate dehydratase small subunit (189 aa).

The protein belongs to the LeuD family. LeuD type 1 subfamily. As to quaternary structure, heterodimer of LeuC and LeuD.

The enzyme catalyses (2R,3S)-3-isopropylmalate = (2S)-2-isopropylmalate. It participates in amino-acid biosynthesis; L-leucine biosynthesis; L-leucine from 3-methyl-2-oxobutanoate: step 2/4. In terms of biological role, catalyzes the isomerization between 2-isopropylmalate and 3-isopropylmalate, via the formation of 2-isopropylmaleate. The protein is 3-isopropylmalate dehydratase small subunit of Staphylococcus epidermidis (strain ATCC 35984 / DSM 28319 / BCRC 17069 / CCUG 31568 / BM 3577 / RP62A).